A 311-amino-acid chain; its full sequence is Progestin and adipoQ receptor family member 3 (311 aa).

The interval 1–20 is required for interaction with SREBF2; sequence MHQKLLKSAHYIELGSYQYW. Over 1-73 the chain is Cytoplasmic; that stretch reads MHQKLLKSAH…FILSNETVNI (73 aa). Positions 41–60 are required for interaction with SCAP; the sequence is KDNPYITDGYRAYLPSRLCI. Positions 61–71 are golgi targeting; the sequence is KSLFILSNETV. Residues 74–96 form a helical membrane-spanning segment; sequence WSHLLGFFLFFTLGIYDMTSVLP. Residues 97-105 lie on the Lumenal side of the membrane; the sequence is SASASREDF. Residues 106–128 traverse the membrane as a helical segment; that stretch reads VICSICLFCFQVCMLCSVGYHLF. Residues 129–140 are Cytoplasmic-facing; sequence SCHRSEKTCRRW. A helical transmembrane segment spans residues 141–163; sequence MALDYAGISIGILGCYVSGVFYA. The Lumenal segment spans residues 164 to 172; the sequence is FYCNNYWRQ. A helical transmembrane segment spans residues 173–195; it reads VYLITVLAMILAVFFAQIHPNYL. Topologically, residues 196–201 are cytoplasmic; it reads TQQWQR. The helical transmembrane segment at 202-224 threads the bilayer; it reads LRSIIFCSVSGYGVIPTLHWVWL. At 225–238 the chain is on the lumenal side; sequence NGGIGAPIVQDFAP. The helical transmembrane segment at 239–256 threads the bilayer; the sequence is RVIVMYMIALLAFLFYIS. At 257–275 the chain is on the cytoplasmic side; it reads KVPERYFPGQLNYLGSSHQ. Residues 276–298 form a helical membrane-spanning segment; the sequence is IWHILAVVMLYWWHQSTVYVMQY. Residues 299–303 are golgi targeting; sequence RHSKP. The Lumenal segment spans residues 299–311; it reads RHSKPCPDYVSHL.

It belongs to the ADIPOR family. In terms of assembly, interacts with SCAP and SREBF2; the interactions are direct, increase in low cholesterol conditions and tether SCAP:SREBP complex to the Golgi apparatus. Interaction with SCAP is mutually exclusive with INSIG1. In hepatocytes, interacts with PPARA and HUWE1; the interactions promote PPARA poylubiquitination and HUWE1-mediated degradation. In macrophages, interacts with PPARG and STUB1; the interactions promote PPARG poylubiquitination and STUB1-mediated degradation. As to expression, widely expressed in a range of tissues.

The protein localises to the golgi apparatus membrane. Its function is as follows. Golgi-scaffold protein which modulates its interactors acitivies by anchoring them to the Golgi apparatus. Functions as a spatial regulator of RAF1 kinase by sequestrating it to the Golgi apparatus. Acts as a positive regulator of cholesterol biosynthesis by mediating the anchoring of the SCAP:SREBP complex in the Golgi apparatus, thereby promoting SCAP:SREBF2 complex formation, potentiating SREBF2 and SREBF1 processing and enhancing lipid synthesis. Also regulates PPARA and PPARG functions by mediating their interaction with E3 ubiquitin ligases, such as STUB1 or HUWE1, leading to their polyubiquitination and proteasome-mediated degradation. The chain is Progestin and adipoQ receptor family member 3 from Homo sapiens (Human).